The chain runs to 434 residues: Adenylosuccinate synthetase (434 aa).

Residues 25 to 31 (GDEGKGK) and 53 to 55 (GHT) each bind GTP. D26 (proton acceptor) is an active-site residue. Positions 26 and 53 each coordinate Mg(2+). Residues 26–29 (DEGK), 51–54 (NAGH), T142, R156, N233, T248, and R312 contribute to the IMP site. H54 serves as the catalytic Proton donor. 308 to 314 (VTTGRKR) serves as a coordination point for substrate. GTP-binding positions include R314, 340 to 342 (KLD), and 422 to 424 (GVG).

It belongs to the adenylosuccinate synthetase family. In terms of assembly, homodimer. Mg(2+) serves as cofactor.

Its subcellular location is the cytoplasm. It carries out the reaction IMP + L-aspartate + GTP = N(6)-(1,2-dicarboxyethyl)-AMP + GDP + phosphate + 2 H(+). Its pathway is purine metabolism; AMP biosynthesis via de novo pathway; AMP from IMP: step 1/2. Its function is as follows. Plays an important role in the de novo pathway and in the salvage pathway of purine nucleotide biosynthesis. Catalyzes the first committed step in the biosynthesis of AMP from IMP. In Schizosaccharomyces japonicus (strain yFS275 / FY16936) (Fission yeast), this protein is Adenylosuccinate synthetase.